Here is a 223-residue protein sequence, read N- to C-terminus: Putative HTLV-1-related endogenous sequence (223 aa).

Positions 1 to 19 are enriched in low complexity; that stretch reads MRCAHAPAPRTRYPTRAPS. The tract at residues 1 to 184 is disordered; sequence MRCAHAPAPR…ARAHGEAGAG (184 aa). The segment covering 115 to 126 has biased composition (basic and acidic residues); sequence GDRRREGPDRSP. Low complexity predominate over residues 133–157; that stretch reads PAAAAQPDSSSAQAPGPSTLRPAAT.

This Homo sapiens (Human) protein is Putative HTLV-1-related endogenous sequence (HRES1).